We begin with the raw amino-acid sequence, 368 residues long: Flagellar P-ring protein (368 aa).

A signal peptide spans 1 to 24; it reads MTLTRPLALISALAALILALPADA.

It belongs to the FlgI family. In terms of assembly, the basal body constitutes a major portion of the flagellar organelle and consists of four rings (L,P,S, and M) mounted on a central rod.

The protein localises to the periplasm. Its subcellular location is the bacterial flagellum basal body. Its function is as follows. Assembles around the rod to form the L-ring and probably protects the motor/basal body from shearing forces during rotation. This chain is Flagellar P-ring protein, found in Methylobacillus flagellatus (strain ATCC 51484 / DSM 6875 / VKM B-1610 / KT).